The following is a 256-amino-acid chain: Protein RGF1 INDUCIBLE TRANSCRIPTION FACTOR 1 (256 aa).

Residues 21-59 (CPYHETAKKNERNVCCLDCCTSLCPHCVPSHRFHRLLQV) form a B box-type zinc finger.

In terms of tissue distribution, expressed predominantly in root meristematic zones.

Its subcellular location is the nucleus. Its function is as follows. Probable transcription factor that plays a central role in mediating RGF1 hormone peptide signaling leading to the production of reactive oxygen species (ROS) in roots to modulate meristem size and root growth, probably via oxidative post-translational modification of the transcription factor PLETHORA (e.g. PLT1 and PLT2). The protein is Protein RGF1 INDUCIBLE TRANSCRIPTION FACTOR 1 of Arabidopsis thaliana (Mouse-ear cress).